The chain runs to 651 residues: Mitochondrial sodium/calcium exchanger protein (651 aa).

The chain crosses the membrane as a helical span at residues 51-71 (VILIILGILYLIILFVIMSSI). Residues 72–91 (ADDFFCPAISGIVSHLRMSE) are Cytoplasmic-facing. A helical transmembrane segment spans residues 92 to 112 (SIAGVTFLAFGNGAPDVFSSI). At 113–126 (SSVLTTPKPKADLA) the chain is on the extracellular side. Residues 127–147 (LGDLFGTSIFVTTVVLAIIIF) traverse the membrane as a helical segment. Residues 148–161 (TKSFKVAIIPTLRD) are Cytoplasmic-facing. Residues 162 to 182 (LIFYMTTLAFIVFCFLKFDKI) traverse the membrane as a helical segment. Residue Glu183 is a topological domain, extracellular. Residues 184 to 204 (VWMPATFLGIYGVYVVTVIIL) form a helical membrane-spanning segment. The Cytoplasmic portion of the chain corresponds to 205 to 398 (GIYRTHRKKR…PSRDEFSEMN (194 aa)). The helical transmembrane segment at 399 to 419 (IFIKIVTVIKVVPVFFFKLTV) threads the bilayer. The Extracellular segment spans residues 420-428 (PSNEMSWCK). Residues 429–449 (PLFILHCFASIQFALFSIQII) traverse the membrane as a helical segment. Residues 450 to 458 (TLKPFDGSP) lie on the Cytoplasmic side of the membrane. Residues 459 to 479 (GLWLYGLGFSAILAMVAMYFL) traverse the membrane as a helical segment. The Extracellular portion of the chain corresponds to 480 to 486 (PLSKEQK). Residues 487 to 507 (YYKEIYSYLGFLMSIAWIYAT) traverse the membrane as a helical segment. Topologically, residues 508 to 510 (SNE) are cytoplasmic. Residues 511–531 (IVSVVTMIGVVTGLSMELLGL) traverse the membrane as a helical segment. The Extracellular segment spans residues 532-559 (TIMAWSNCIGDIVADIAVVKQGYPKMAM). A helical transmembrane segment spans residues 560 to 580 (AAAIGGPLFNLLIGFGLPFTI). Topologically, residues 581 to 595 (AAAQGKEMELLINPV) are cytoplasmic. A helical transmembrane segment spans residues 596–616 (YRLLMLFLGISLVTTFVALFI). The Extracellular portion of the chain corresponds to 617–626 (QRFTVRRPHA). Residues 627–647 (VLLIFIFVVFLIFICLAEFHV) form a helical membrane-spanning segment. Residues 648-651 (LEWN) are Cytoplasmic-facing.

It belongs to the Ca(2+):cation antiporter (CaCA) (TC 2.A.19) family. SLC24A subfamily. In terms of tissue distribution, expressed in the seam cells of the organism. Expression is visible in the seam cells across all larval stages, and expression persists into the adult stage of the organism.

The protein localises to the mitochondrion inner membrane. With respect to regulation, inhibited by the sodium/calcium exchanger inhibitor CGP-37157. Mitochondrial sodium/calcium antiporter that mediates sodium-dependent calcium efflux from mitochondrion, thereby acting as a key regulator of mitochondrion calcium homeostasis. Required for patterning of neural circuits: functions in the same pathway as RAC-dependent effectors of the unc-6/netrin signaling pathway to set left/ right patterning of the VD/DD GABAergic circuit. In Caenorhabditis elegans, this protein is Mitochondrial sodium/calcium exchanger protein.